The following is a 653-amino-acid chain: Fructose-1,6-bisphosphatase class 3 (653 aa).

The protein belongs to the FBPase class 3 family. Mn(2+) is required as a cofactor.

The catalysed reaction is beta-D-fructose 1,6-bisphosphate + H2O = beta-D-fructose 6-phosphate + phosphate. It participates in carbohydrate biosynthesis; gluconeogenesis. The sequence is that of Fructose-1,6-bisphosphatase class 3 from Listeria monocytogenes serovar 1/2a (strain ATCC BAA-679 / EGD-e).